The following is a 342-amino-acid chain: NADH-ubiquinone oxidoreductase chain 2 (342 aa).

The next 9 helical transmembrane spans lie at T25–L45, I58–I78, M94–P114, M146–L166, I174–E194, N195–F215, F238–P258, L274–F294, and V316–F336.

Belongs to the complex I subunit 2 family.

The protein resides in the mitochondrion inner membrane. The catalysed reaction is a ubiquinone + NADH + 5 H(+)(in) = a ubiquinol + NAD(+) + 4 H(+)(out). Its function is as follows. Core subunit of the mitochondrial membrane respiratory chain NADH dehydrogenase (Complex I) that is believed to belong to the minimal assembly required for catalysis. Complex I functions in the transfer of electrons from NADH to the respiratory chain. The immediate electron acceptor for the enzyme is believed to be ubiquinone. This Locusta migratoria (Migratory locust) protein is NADH-ubiquinone oxidoreductase chain 2 (ND2).